The primary structure comprises 388 residues: Deoxyuridine 5'-triphosphate nucleotidohydrolase (388 aa).

Basic and acidic residues predominate over residues 77-88; the sequence is EEKYDKEQHPGE. Disordered stretches follow at residues 77 to 96 and 336 to 388; these read EEKYDKEQHPGEDEASSPLP and THTP…PRHP. Residues 351–363 are compositionally biased toward acidic residues; sequence VDDDVDETEEDEK.

The protein belongs to the dUTPase family. It depends on Mg(2+) as a cofactor.

Its subcellular location is the virion. It carries out the reaction dUTP + H2O = dUMP + diphosphate + H(+). Its pathway is pyrimidine metabolism; dUMP biosynthesis; dUMP from dCTP (dUTP route): step 2/2. In terms of biological role, involved in nucleotide metabolism: produces dUMP, the immediate precursor of thymidine nucleotides and decreases the intracellular concentration of dUTP to avoid uracil incorporation into viral DNA. In Human cytomegalovirus (strain AD169) (HHV-5), this protein is Deoxyuridine 5'-triphosphate nucleotidohydrolase.